The chain runs to 904 residues: Protein translocase subunit SecA (904 aa).

Residues glutamine 89, glycine 107–threonine 111, and aspartate 502 contribute to the ATP site. Residues valine 872–serine 892 are disordered. Cysteine 888, cysteine 890, cysteine 899, and histidine 900 together coordinate Zn(2+).

Belongs to the SecA family. As to quaternary structure, part of the essential protein translocation apparatus which comprises SecA, SecYEG and auxiliary proteins SecDF-YajC and YidC. Homodimer. Requires Zn(2+) as cofactor.

The protein localises to the cell inner membrane. It localises to the cytoplasm. The enzyme catalyses ATP + H2O + cellular proteinSide 1 = ADP + phosphate + cellular proteinSide 2.. Its function is as follows. Part of the Sec protein translocase complex. Interacts with the SecYEG preprotein conducting channel. Has a central role in coupling the hydrolysis of ATP to the transfer of proteins into and across the cell membrane, serving both as a receptor for the preprotein-SecB complex and as an ATP-driven molecular motor driving the stepwise translocation of polypeptide chains across the membrane. The sequence is that of Protein translocase subunit SecA from Rhodobacter capsulatus (Rhodopseudomonas capsulata).